The following is a 116-amino-acid chain: Large ribosomal subunit protein bL17 (116 aa).

This sequence belongs to the bacterial ribosomal protein bL17 family. In terms of assembly, part of the 50S ribosomal subunit. Contacts protein L32.

The protein is Large ribosomal subunit protein bL17 of Synechococcus sp. (strain RCC307).